A 736-amino-acid chain; its full sequence is Oligopeptide transporter 6 (736 aa).

The next 15 membrane-spanning stretches (helical) occupy residues 43–63 (MWVL…FFWY), 66–86 (MPLS…GHLM), 116–136 (VLIT…HILS), 148–168 (FLPA…WAGL), 210–230 (FFLI…YLFT), 258–278 (LGIG…GSPL), 288–308 (VAIG…WLNI), 357–377 (FFAV…VHVL), 412–432 (VPLW…MFIS), 443–463 (WWGV…IGVI), 489–511 (PVAN…TFIS), 527–547 (FMAQ…TAWW), 602–622 (WFFL…KMFP), 645–665 (ATAV…HFIF), and 678–698 (VLSG…FLAL).

It belongs to the oligopeptide OPT transporter (TC 2.A.67.1) family. In terms of tissue distribution, expressed in flowers and roots, and at a low level in leaves and stems. Detected in the cambial zone of the vascular bundles and in the region of lateral root initiation. Low expression in the vascular network of the petals and high in the stamen filaments and the gynoecium.

It is found in the membrane. Its function is as follows. Involved in the translocation of tetra- and pentapeptides across the cellular membrane in an energy-dependent manner. Also involved in transport of glutathione derivatives and metal complexes, and may be involved in stress resistance. The protein is Oligopeptide transporter 6 (OPT6) of Arabidopsis thaliana (Mouse-ear cress).